We begin with the raw amino-acid sequence, 1114 residues long: Kinesin-like protein KIN-12B (1114 aa).

Residues 1–119 (MRSLFSSKLS…GGGGGDSGVQ (119 aa)) are disordered. Low complexity predominate over residues 98-107 (SAASPAPEGA). Residues 117 to 459 (GVQVVVRVRP…LRFAHRAKDI (343 aa)) enclose the Kinesin motor domain. Residue 197 to 204 (GQTGSGKT) coordinates ATP. Coiled coils occupy residues 772–810 (VLSA…KNQL) and 999–1043 (ELLV…DQEV). Positions 1055-1065 (LPSNVVQSPEP) are enriched in polar residues. Residues 1055-1081 (LPSNVVQSPEPSETGPARYDTGGSFGD) are disordered.

This sequence belongs to the TRAFAC class myosin-kinesin ATPase superfamily. Kinesin family. KIN-12 subfamily.

The polypeptide is Kinesin-like protein KIN-12B (Oryza sativa subsp. japonica (Rice)).